The sequence spans 164 residues: R-phycoerythrin alpha chain (164 aa).

(2R,3E)-phycoerythrobilin contacts are provided by cysteine 82 and cysteine 139.

This sequence belongs to the phycobiliprotein family. In terms of assembly, heterodimer of an alpha and a beta chain. Post-translationally, contains two covalently linked bilin chromophores.

The protein localises to the plastid. Its subcellular location is the chloroplast thylakoid membrane. Functionally, light-harvesting photosynthetic bile pigment-protein from the phycobiliprotein complex. This chain is R-phycoerythrin alpha chain (cpeA), found in Pyropia tenera (Nori).